The sequence spans 370 residues: Anhydro-N-acetylmuramic acid kinase (370 aa).

12-19 (GTSLDGVD) provides a ligand contact to ATP.

Belongs to the anhydro-N-acetylmuramic acid kinase family.

The catalysed reaction is 1,6-anhydro-N-acetyl-beta-muramate + ATP + H2O = N-acetyl-D-muramate 6-phosphate + ADP + H(+). It participates in amino-sugar metabolism; 1,6-anhydro-N-acetylmuramate degradation. It functions in the pathway cell wall biogenesis; peptidoglycan recycling. Functionally, catalyzes the specific phosphorylation of 1,6-anhydro-N-acetylmuramic acid (anhMurNAc) with the simultaneous cleavage of the 1,6-anhydro ring, generating MurNAc-6-P. Is required for the utilization of anhMurNAc either imported from the medium or derived from its own cell wall murein, and thus plays a role in cell wall recycling. In Yersinia pseudotuberculosis serotype O:1b (strain IP 31758), this protein is Anhydro-N-acetylmuramic acid kinase.